A 427-amino-acid chain; its full sequence is Trigger factor (427 aa).

Positions 163–248 (GDIAVIDFKG…IKSIKVKELP (86 aa)) constitute a PPIase FKBP-type domain.

The protein belongs to the FKBP-type PPIase family. Tig subfamily.

The protein localises to the cytoplasm. The catalysed reaction is [protein]-peptidylproline (omega=180) = [protein]-peptidylproline (omega=0). Involved in protein export. Acts as a chaperone by maintaining the newly synthesized protein in an open conformation. Functions as a peptidyl-prolyl cis-trans isomerase. The sequence is that of Trigger factor from Clostridium beijerinckii (strain ATCC 51743 / NCIMB 8052) (Clostridium acetobutylicum).